A 438-amino-acid polypeptide reads, in one-letter code: Elongation factor 1-alpha (438 aa).

The tr-type G domain maps to 6–229 (KPHLNIVIIG…ALDTLEVPPK (224 aa)). A G1 region spans residues 15 to 22 (GHVDHGKS). 15–22 (GHVDHGKS) provides a ligand contact to GTP. S22 is a binding site for Mg(2+). The segment at 71-75 (GVTIS) is G2. The tract at residues 92–95 (DAPG) is G3. GTP contacts are provided by residues 92–96 (DAPGH) and 154–157 (NKMD). The tract at residues 154–157 (NKMD) is G4. The tract at residues 195-197 (SAW) is G5.

Belongs to the TRAFAC class translation factor GTPase superfamily. Classic translation factor GTPase family. EF-Tu/EF-1A subfamily.

The protein localises to the cytoplasm. It carries out the reaction GTP + H2O = GDP + phosphate + H(+). In terms of biological role, GTP hydrolase that promotes the GTP-dependent binding of aminoacyl-tRNA to the A-site of ribosomes during protein biosynthesis. This Desulfurococcus mucosus (Desulfurococcus mobilis) protein is Elongation factor 1-alpha.